Consider the following 224-residue polypeptide: MPFLFVSGTGTGVGKTFSTAVLVRYLADQGHDVLPVKLVQTGELPGEGDIFTIERLTGIAGEEFARFKDPLAPNLAARREGIEPIQFDQIISWLRGFDDPDRIIVVEGAGGLLVRLGEDFTLADVASALNAPLVIVTSTGLGSLNAAELSVEAANRRGLTVLGVLGGSIPQNPDLATMLNLEEFERVTGVPFWGALPEGLSRVEGFVEKQSFPALDAFKKPPAR.

Glycine 12 to phenylalanine 17 serves as a coordination point for ATP. A Mg(2+)-binding site is contributed by threonine 16. Lysine 37 is a catalytic residue. Threonine 41 lines the substrate pocket. Glutamate 107 serves as a coordination point for Mg(2+). ATP is bound by residues glutamate 107–glycine 110, glycine 167–serine 168, proline 197–glycine 199, and glutamate 204.

The protein belongs to the dethiobiotin synthetase family. Homodimer. Requires Mg(2+) as cofactor.

The protein localises to the cytoplasm. It carries out the reaction (7R,8S)-7,8-diammoniononanoate + CO2 + ATP = (4R,5S)-dethiobiotin + ADP + phosphate + 3 H(+). The protein operates within cofactor biosynthesis; biotin biosynthesis; biotin from 7,8-diaminononanoate: step 1/2. Catalyzes a mechanistically unusual reaction, the ATP-dependent insertion of CO2 between the N7 and N8 nitrogen atoms of 7,8-diaminopelargonic acid (DAPA, also called 7,8-diammoniononanoate) to form a ureido ring. The chain is ATP-dependent dethiobiotin synthetase BioD from Corynebacterium glutamicum (strain R).